A 548-amino-acid chain; its full sequence is Chaperonin GroEL (548 aa).

Residues 30–33 (TLGP), K51, 87–91 (DGTTT), G415, 479–481 (NAA), and D495 contribute to the ATP site.

Belongs to the chaperonin (HSP60) family. Forms a cylinder of 14 subunits composed of two heptameric rings stacked back-to-back. Interacts with the co-chaperonin GroES.

The protein resides in the cytoplasm. It catalyses the reaction ATP + H2O + a folded polypeptide = ADP + phosphate + an unfolded polypeptide.. Functionally, together with its co-chaperonin GroES, plays an essential role in assisting protein folding. The GroEL-GroES system forms a nano-cage that allows encapsulation of the non-native substrate proteins and provides a physical environment optimized to promote and accelerate protein folding. In Salmonella arizonae (strain ATCC BAA-731 / CDC346-86 / RSK2980), this protein is Chaperonin GroEL.